The chain runs to 570 residues: Proline--tRNA ligase (570 aa).

The protein belongs to the class-II aminoacyl-tRNA synthetase family. ProS type 1 subfamily. Homodimer.

Its subcellular location is the cytoplasm. It carries out the reaction tRNA(Pro) + L-proline + ATP = L-prolyl-tRNA(Pro) + AMP + diphosphate. Its function is as follows. Catalyzes the attachment of proline to tRNA(Pro) in a two-step reaction: proline is first activated by ATP to form Pro-AMP and then transferred to the acceptor end of tRNA(Pro). As ProRS can inadvertently accommodate and process non-cognate amino acids such as alanine and cysteine, to avoid such errors it has two additional distinct editing activities against alanine. One activity is designated as 'pretransfer' editing and involves the tRNA(Pro)-independent hydrolysis of activated Ala-AMP. The other activity is designated 'posttransfer' editing and involves deacylation of mischarged Ala-tRNA(Pro). The misacylated Cys-tRNA(Pro) is not edited by ProRS. This Neisseria meningitidis serogroup B (strain ATCC BAA-335 / MC58) protein is Proline--tRNA ligase.